The sequence spans 465 residues: Tyrosine 3-monooxygenase (465 aa).

The Fe cation site is built by H294, H299, and E339.

This sequence belongs to the biopterin-dependent aromatic amino acid hydroxylase family. It depends on Fe(2+) as a cofactor.

The protein localises to the cytoplasm. The protein resides in the perinuclear region. It catalyses the reaction (6R)-L-erythro-5,6,7,8-tetrahydrobiopterin + L-tyrosine + O2 = (4aS,6R)-4a-hydroxy-L-erythro-5,6,7,8-tetrahydrobiopterin + L-dopa. It participates in catecholamine biosynthesis; dopamine biosynthesis; dopamine from L-tyrosine: step 1/2. The sequence is that of Tyrosine 3-monooxygenase (TH) from Schistosoma mansoni (Blood fluke).